Consider the following 217-residue polypeptide: Ribosomal RNA small subunit methyltransferase G (217 aa).

S-adenosyl-L-methionine contacts are provided by residues Gly74, Leu79, 125–126 (IQ), and Arg143.

The protein belongs to the methyltransferase superfamily. RNA methyltransferase RsmG family.

The protein resides in the cytoplasm. The enzyme catalyses guanosine(527) in 16S rRNA + S-adenosyl-L-methionine = N(7)-methylguanosine(527) in 16S rRNA + S-adenosyl-L-homocysteine. Specifically methylates the N7 position of guanine in position 527 of 16S rRNA. This is Ribosomal RNA small subunit methyltransferase G from Syntrophotalea carbinolica (strain DSM 2380 / NBRC 103641 / GraBd1) (Pelobacter carbinolicus).